A 312-amino-acid chain; its full sequence is Polyamine aminopropyltransferase (312 aa).

One can recognise a PABS domain in the interval 7 to 247; it reads FFWVQEYFTP…GPLGFALAAQ (241 aa). Glutamine 36 contacts S-methyl-5'-thioadenosine. Histidine 67 and glutamate 95 together coordinate spermidine. S-methyl-5'-thioadenosine contacts are provided by residues aspartate 115 and 147 to 148; that span reads DA. Residue aspartate 165 is the Proton acceptor of the active site. An S-methyl-5'-thioadenosine-binding site is contributed by proline 174.

Belongs to the spermidine/spermine synthase family. Homodimer or homotetramer.

The protein resides in the cytoplasm. The catalysed reaction is S-adenosyl 3-(methylsulfanyl)propylamine + putrescine = S-methyl-5'-thioadenosine + spermidine + H(+). Its pathway is amine and polyamine biosynthesis; spermidine biosynthesis; spermidine from putrescine: step 1/1. Its function is as follows. Catalyzes the irreversible transfer of a propylamine group from the amino donor S-adenosylmethioninamine (decarboxy-AdoMet) to putrescine (1,4-diaminobutane) to yield spermidine. In Synechococcus sp. (strain JA-2-3B'a(2-13)) (Cyanobacteria bacterium Yellowstone B-Prime), this protein is Polyamine aminopropyltransferase.